The following is a 129-amino-acid chain: Fluoride-specific ion channel FluC (129 aa).

4 helical membrane-spanning segments follow: residues 1-21 (MLMK…LGSA), 35-55 (GGLP…IGFI), 71-91 (LFLV…IFEN), and 105-125 (AYLA…TFFA). Gly79 and Thr82 together coordinate Na(+).

Belongs to the fluoride channel Fluc/FEX (TC 1.A.43) family.

Its subcellular location is the cell inner membrane. The catalysed reaction is fluoride(in) = fluoride(out). Na(+) is not transported, but it plays an essential structural role and its presence is essential for fluoride channel function. Fluoride-specific ion channel. Important for reducing fluoride concentration in the cell, thus reducing its toxicity. The polypeptide is Fluoride-specific ion channel FluC (Chlorobium phaeobacteroides (strain DSM 266 / SMG 266 / 2430)).